The following is a 469-amino-acid chain: 3-isopropylmalate dehydratase large subunit (469 aa).

[4Fe-4S] cluster is bound by residues cysteine 347, cysteine 410, and cysteine 413.

This sequence belongs to the aconitase/IPM isomerase family. LeuC type 1 subfamily. As to quaternary structure, heterodimer of LeuC and LeuD. The cofactor is [4Fe-4S] cluster.

It carries out the reaction (2R,3S)-3-isopropylmalate = (2S)-2-isopropylmalate. It participates in amino-acid biosynthesis; L-leucine biosynthesis; L-leucine from 3-methyl-2-oxobutanoate: step 2/4. Functionally, catalyzes the isomerization between 2-isopropylmalate and 3-isopropylmalate, via the formation of 2-isopropylmaleate. The sequence is that of 3-isopropylmalate dehydratase large subunit from Burkholderia thailandensis (strain ATCC 700388 / DSM 13276 / CCUG 48851 / CIP 106301 / E264).